Here is a 101-residue protein sequence, read N- to C-terminus: Iron-sulfur cluster assembly protein CyaY (101 aa).

The protein belongs to the frataxin family.

Functionally, involved in iron-sulfur (Fe-S) cluster assembly. May act as a regulator of Fe-S biogenesis. This is Iron-sulfur cluster assembly protein CyaY from Rickettsia felis (strain ATCC VR-1525 / URRWXCal2) (Rickettsia azadi).